A 127-amino-acid polypeptide reads, in one-letter code: Anti-adapter protein IraD (127 aa).

This sequence belongs to the GpW/Gp25 family. IraD subfamily. Interacts with RssB.

It is found in the cytoplasm. In terms of biological role, inhibits RpoS proteolysis by regulating RssB activity, thereby increasing the stability of the sigma stress factor RpoS during oxidative stress. Its effect on RpoS stability is due to its interaction with RssB, which probably blocks the interaction of RssB with RpoS, and the consequent delivery of the RssB-RpoS complex to the ClpXP protein degradation pathway. The protein is Anti-adapter protein IraD of Escherichia coli (strain SMS-3-5 / SECEC).